A 190-amino-acid polypeptide reads, in one-letter code: Translation initiation factor IF-3 (190 aa).

It belongs to the IF-3 family. Monomer.

It localises to the cytoplasm. IF-3 binds to the 30S ribosomal subunit and shifts the equilibrium between 70S ribosomes and their 50S and 30S subunits in favor of the free subunits, thus enhancing the availability of 30S subunits on which protein synthesis initiation begins. The sequence is that of Translation initiation factor IF-3 from Prochlorococcus marinus (strain AS9601).